The chain runs to 134 residues: DNA-binding protein inhibitor ID-2 (134 aa).

Phosphoserine occurs at positions 14 and 25. The bHLH domain occupies 23-75 (SRSKTPVDDPMSLLYNMNDCYSKLKELVPSIPQNKKVTKMEILQHVIDYILDL). An interaction with IFI204 region spans residues 30–83 (DDPMSLLYNMNDCYSKLKELVPSIPQNKKVTKMEILQHVIDYILDLQIALDSHP). The Nuclear export signal motif lies at 106–115 (LNTDISILSL).

Interacts with GATA4 and NKX2-5. Interacts with NR0B2. Interacts with CLOCK and BMAL1. Interacts with IFI204. Interacts with NEDD9/HEF1. Interacts with ASB4; this interaction promotes ID2 proteasomal degradation. Post-translationally, polyubiquitinated; which is favored by Ifi204 and leads to proteasomal degradation. Ubiquitinated in a ASB4-depedent manner, leading to proteasomal degradation. In terms of processing, phosphorylated in vitro by CDK1, PKA and PKC.

It is found in the cytoplasm. The protein localises to the nucleus. In terms of biological role, transcriptional regulator (lacking a basic DNA binding domain) which negatively regulates the basic helix-loop-helix (bHLH) transcription factors by forming heterodimers and inhibiting their DNA binding and transcriptional activity. Implicated in regulating a variety of cellular processes, including cellular growth, senescence, differentiation, apoptosis, angiogenesis, and neoplastic transformation. Inhibits skeletal muscle and cardiac myocyte differentiation. Regulates the circadian clock by repressing the transcriptional activator activity of the CLOCK-BMAL1 heterodimer. Restricts the CLOCK and BMAL1 localization to the cytoplasm. Plays a role in both the input and output pathways of the circadian clock: in the input component, is involved in modulating the magnitude of photic entrainment and in the output component, contributes to the regulation of a variety of liver clock-controlled genes involved in lipid metabolism. The sequence is that of DNA-binding protein inhibitor ID-2 (Id2) from Mus musculus (Mouse).